An 861-amino-acid polypeptide reads, in one-letter code: Putative glutamate--cysteine ligase 2-2 (861 aa).

The segment at 1–372 is carboxylate-amine ligase; the sequence is MSDARIVAVG…RDVPPAGAAA (372 aa). The unknown stretch occupies residues 373-861; it reads ALGSAPAVSA…GSKDTWIPRR (489 aa).

This sequence in the N-terminal section; belongs to the glutamate--cysteine ligase type 2 family. YbdK subfamily.

The enzyme catalyses L-cysteine + L-glutamate + ATP = gamma-L-glutamyl-L-cysteine + ADP + phosphate + H(+). ATP-dependent carboxylate-amine ligase which exhibits weak glutamate--cysteine ligase activity. In Frankia casuarinae (strain DSM 45818 / CECT 9043 / HFP020203 / CcI3), this protein is Putative glutamate--cysteine ligase 2-2.